We begin with the raw amino-acid sequence, 349 residues long: Protein MULTIPLE CHLOROPLAST DIVISION SITE 1 (349 aa).

Residues M1–V52 constitute a chloroplast transit peptide. Over C53–V116 the chain is Chloroplast intermembrane. Residues N117–V139 form a helical membrane-spanning segment. Residues R140–S349 are Stromal-facing. The interval Q315–S349 is disordered. A compositionally biased stretch (polar residues) spans I329 to S343.

In terms of assembly, interacts with MIND1. Interacts with ARC6 in the chloroplast stroma and binds to FtsZ2-1 in an ARC6-dependent manner.

It is found in the plastid. The protein localises to the chloroplast inner membrane. Its function is as follows. Required for chloroplast division. Together with MIND1 and ARC3, regulates FtsZ ring positioning in chloroplasts in an ARC6-dependent manner. Determines the site of chloroplast division in concert with MIND1. Not directly involved in ring formation, but required for MIND1 and MINE1 localization to regulate FtsZ ring formation during plastidial constriction. In Arabidopsis thaliana (Mouse-ear cress), this protein is Protein MULTIPLE CHLOROPLAST DIVISION SITE 1.